Consider the following 226-residue polypeptide: Cytidylate kinase (226 aa).

ATP is bound at residue 12–20 (GPSGAGKGT).

Belongs to the cytidylate kinase family. Type 1 subfamily.

Its subcellular location is the cytoplasm. It catalyses the reaction CMP + ATP = CDP + ADP. The enzyme catalyses dCMP + ATP = dCDP + ADP. This Xanthomonas campestris pv. campestris (strain B100) protein is Cytidylate kinase.